Here is a 944-residue protein sequence, read N- to C-terminus: UvrABC system protein A (944 aa).

31 to 38 (GLSGSGKS) is a binding site for ATP. The segment at 253–280 (CPVCGHAISELEPKLFSFNNPAGACPTC) adopts a C4-type zinc-finger fold. ABC transporter domains follow at residues 309-586 (WDRR…PDSL) and 606-936 (RNKK…HYLK). ATP is bound at residue 639-646 (GVSGSGKS). The segment at 739–765 (CEACQGDGLIKVEMHFLPDIYVPCDVC) adopts a C4-type zinc-finger fold.

The protein belongs to the ABC transporter superfamily. UvrA family. In terms of assembly, forms a heterotetramer with UvrB during the search for lesions.

It localises to the cytoplasm. In terms of biological role, the UvrABC repair system catalyzes the recognition and processing of DNA lesions. UvrA is an ATPase and a DNA-binding protein. A damage recognition complex composed of 2 UvrA and 2 UvrB subunits scans DNA for abnormalities. When the presence of a lesion has been verified by UvrB, the UvrA molecules dissociate. The protein is UvrABC system protein A of Pseudomonas putida (strain ATCC 47054 / DSM 6125 / CFBP 8728 / NCIMB 11950 / KT2440).